The following is an 804-amino-acid chain: Ribonucleoside-diphosphate reductase large subunit-like protein (804 aa).

This sequence belongs to the ribonucleoside diphosphate reductase large chain family.

Its subcellular location is the virion. The protein resides in the host cytoplasm. Does not possess a ribonucleotide reductase activity. Betaherpesviruses probably use another strategy to expand the dNTP pool in a quiescent host cell. In Homo sapiens (Human), this protein is Ribonucleoside-diphosphate reductase large subunit-like protein.